Consider the following 950-residue polypeptide: Bifunctional glutamine synthetase adenylyltransferase/adenylyl-removing enzyme (950 aa).

Residues 1–443 form an adenylyl removase region; it reads MSLPSPLLPV…VFVTLIGDEE (443 aa). The interval 450-950 is adenylyl transferase; it reads ERHFNELWDM…WQEWLESSTI (501 aa).

Belongs to the GlnE family. Mg(2+) is required as a cofactor.

The catalysed reaction is [glutamine synthetase]-O(4)-(5'-adenylyl)-L-tyrosine + phosphate = [glutamine synthetase]-L-tyrosine + ADP. It carries out the reaction [glutamine synthetase]-L-tyrosine + ATP = [glutamine synthetase]-O(4)-(5'-adenylyl)-L-tyrosine + diphosphate. Its function is as follows. Involved in the regulation of glutamine synthetase GlnA, a key enzyme in the process to assimilate ammonia. When cellular nitrogen levels are high, the C-terminal adenylyl transferase (AT) inactivates GlnA by covalent transfer of an adenylyl group from ATP to specific tyrosine residue of GlnA, thus reducing its activity. Conversely, when nitrogen levels are low, the N-terminal adenylyl removase (AR) activates GlnA by removing the adenylyl group by phosphorolysis, increasing its activity. The regulatory region of GlnE binds the signal transduction protein PII (GlnB) which indicates the nitrogen status of the cell. This Vibrio vulnificus (strain YJ016) protein is Bifunctional glutamine synthetase adenylyltransferase/adenylyl-removing enzyme.